We begin with the raw amino-acid sequence, 398 residues long: DnaJ-like protein R260 (398 aa).

A J domain is found at 7–72; that stretch reads DLYEILGLTP…EKRRVYDQYG (66 aa). A CR-type zinc finger spans residues 118–202; sequence KKTVKVTITV…CKGAGINKSE (85 aa). CXXCXGXG motif repeat units lie at residues 131–138, 147–154, 173–180, and 190–197; these read CDDCDATG, CKVCRGKG, CHGCQGKK, and CPSCKGAG. Residues 364–398 form a disordered region; that stretch reads LRQINTDPSDESQDRDSEESYGGHGRPEGVGCAQQ. The span at 371–382 shows a compositional bias: acidic residues; the sequence is PSDESQDRDSEE.

It depends on Zn(2+) as a cofactor.

The chain is DnaJ-like protein R260 from Acanthamoeba polyphaga mimivirus (APMV).